Here is a 600-residue protein sequence, read N- to C-terminus: Chaperonin 60 subunit beta 1, chloroplastic (600 aa).

Polar residues predominate over residues M1–G12. The interval M1–D23 is disordered. A chloroplast-targeting transit peptide spans M1–C54. S101 and S478 each carry phosphoserine.

It belongs to the chaperonin (HSP60) family. Part of the Cpn60 complex composed of 7 alpha and 7 beta subunits. Can also form a complex composed of 14 beta subunits only. Both complexes show ATPase activity. The Cpn60 complex interacts with the Cpn10 complex. Interacts with RAB during heat stress. As to expression, expressed in leaves, stems, petioles and flowers.

Its subcellular location is the plastid. The protein resides in the chloroplast stroma. Binds RuBisCO small and large subunits and is implicated in the assembly of the enzyme oligomer. Involved in protein assisted folding. Required for proper plastid division. The polypeptide is Chaperonin 60 subunit beta 1, chloroplastic (CPN60B1) (Arabidopsis thaliana (Mouse-ear cress)).